We begin with the raw amino-acid sequence, 301 residues long: Securin (301 aa).

3 disordered regions span residues 1–55 (MLPR…RTVL), 82–120 (DSPT…DTPL), and 218–284 (ASDQ…RSIH). The short motif at 33–36 (RAPL) is the D-box 1 element. The span at 38–50 (STKQSNAPSSVTV) shows a compositional bias: polar residues. The D-box 2 signature appears at 52–55 (RTVL). Polar residues-rich tracts occupy residues 88–98 (EPNSQGISRSA), 110–119 (PRRSSLTDTP), and 231–245 (VSKQ…STVY). 2 repeats span residues 250–260 (ASGKSIPRPLS) and 270–280 (ASGNSRRRPLS).

The protein belongs to the securin family. Interacts with the caspase-like cut1, and prevents its protease activity probably by covering its active site. In terms of processing, ubiquitinated by the anaphase promoting complex (APC) at the onset of anaphase, conducting to its degradation.

The protein localises to the cytoplasm. The protein resides in the nucleus. Its function is as follows. Regulatory protein, which plays a central role in chromosome stability. Probably acts by blocking the action of key proteins. During the mitosis, it blocks separase/cut1 function, preventing the proteolysis of the cohesin complex and the subsequent segregation of the chromosomes. At the onset of anaphase, it is ubiquitinated, conducting to its destruction and to the liberation of cut1. The polypeptide is Securin (cut2) (Schizosaccharomyces pombe (strain 972 / ATCC 24843) (Fission yeast)).